The following is a 207-amino-acid chain: Dephospho-CoA kinase (207 aa).

Residues 4-203 (VIGLTGGIAS…EEGYIEKPNY (200 aa)) form the DPCK domain. Position 12-17 (12-17 (ASGKST)) interacts with ATP.

It belongs to the CoaE family.

It localises to the cytoplasm. The enzyme catalyses 3'-dephospho-CoA + ATP = ADP + CoA + H(+). Its pathway is cofactor biosynthesis; coenzyme A biosynthesis; CoA from (R)-pantothenate: step 5/5. Its function is as follows. Catalyzes the phosphorylation of the 3'-hydroxyl group of dephosphocoenzyme A to form coenzyme A. The sequence is that of Dephospho-CoA kinase from Staphylococcus aureus (strain bovine RF122 / ET3-1).